The following is a 311-amino-acid chain: Cytosolic Fe-S cluster assembly factor Nubp1 homolog (311 aa).

Residues 1–21 (MQAPPPEHCPGVESEDAGKGS) form a disordered region. [4Fe-4S] cluster-binding residues include C9, C23, C26, and C32. Position 63–70 (63–70 (GKGGVGKS)) interacts with ATP. [4Fe-4S] cluster is bound by residues C240 and C243.

The protein belongs to the Mrp/NBP35 ATP-binding proteins family. NUBP1/NBP35 subfamily. Heterotetramer of 2 Nubp1 and 2 Nubp2 chains. [4Fe-4S] cluster is required as a cofactor.

Its subcellular location is the cytoplasm. Its function is as follows. Component of the cytosolic iron-sulfur (Fe/S) protein assembly (CIA) machinery. Required for maturation of extramitochondrial Fe-S proteins. The Nubp1-Nubp2 heterotetramer forms a Fe-S scaffold complex, mediating the de novo assembly of an Fe-S cluster and its transfer to target apoproteins. The sequence is that of Cytosolic Fe-S cluster assembly factor Nubp1 homolog from Drosophila sechellia (Fruit fly).